Reading from the N-terminus, the 455-residue chain is Protein 60A (455 aa).

A signal peptide spans 1-36; the sequence is MSGLRNTSEAVAVLASLGLGMVLLMFVATTPPAVEA. Positions 37-335 are excised as a propeptide; the sequence is TQSGIYIDNG…SASHPRKRKK (299 aa). The span at 108 to 118 shows a compositional bias: acidic residues; sequence GLSDQDEDDDY. Residues 108-138 form a disordered region; that stretch reads GLSDQDEDDDYERGHRSRRSADLEEDEGEQQ. 2 N-linked (GlcNAc...) asparagine glycosylation sites follow: Asn238 and Asn250. The disordered stretch occupies residues 316 to 345; that stretch reads AHSSHHRSKRSASHPRKRKKSVSPNNVPLL. A compositionally biased stretch (basic residues) spans 318–336; that stretch reads SSHHRSKRSASHPRKRKKS. 3 cysteine pairs are disulfide-bonded: Cys354-Cys420, Cys383-Cys452, and Cys387-Cys454. Asn396 carries N-linked (GlcNAc...) asparagine glycosylation.

The protein belongs to the TGF-beta family. Homodimer; disulfide-linked. Interacts with nord and dpp. Expressed in cells of the developing foregut and hindgut during germ band retraction and later embryonic stages. Expressed in the wing disk, mainly in the posterior compartment in the pteropleural and medial regions extending into the progenitors of the scutellum. High levels are found within the posterior and anterior compartments of the wing pouch and low levels in the hinge region. In the eye/antennal disk, expression is highest anterior to the morphogenetic furrow and in the medial regions with lower levels of expression posterior to the morphogenetic furrow. Expressed throughout the posterior compartment of the leg imaginal disks and within the ventral anterior compartment.

It is found in the secreted. In terms of biological role, required for the growth of imaginal tissues and for patterning of the adult wing. The protein is Protein 60A (gbb) of Drosophila melanogaster (Fruit fly).